Here is a 402-residue protein sequence, read N- to C-terminus: B box and SPRY domain-containing protein (402 aa).

The segment at Met-1–Pro-20 is disordered. Residues Gly-17–Glu-65 form a B box-type zinc finger. The B30.2/SPRY domain occupies Pro-212–Arg-402.

In terms of assembly, interacts with TRPV5 and TRPV6. Interacts with YWHAZ/14-3-3 protein zeta.

The protein resides in the cytoplasm. It is found in the membrane. Its function is as follows. May regulate epithelial calcium transport by inhibiting TRPV5 activity. This chain is B box and SPRY domain-containing protein (BSPRY), found in Homo sapiens (Human).